A 739-amino-acid polypeptide reads, in one-letter code: UPF0313 protein YgiQ (739 aa).

The Radical SAM core domain occupies 372–650; that stretch reads AYEMIRFSVN…KALLRYHDPA (279 aa). [4Fe-4S] cluster is bound by residues C386, C390, and C393. A disordered region spans residues 686-739; that stretch reads EARRQNRNTRPALTKHTPMATQCQTPATAKKASSTQSRPVNAGAKKRPKAAVGR. Positions 704–724 are enriched in polar residues; the sequence is MATQCQTPATAKKASSTQSRP. A compositionally biased stretch (basic residues) spans 729 to 739; the sequence is AKKRPKAAVGR.

This sequence belongs to the UPF0313 family. Requires [4Fe-4S] cluster as cofactor.

The sequence is that of UPF0313 protein YgiQ from Escherichia coli O157:H7.